Here is a 130-residue protein sequence, read N- to C-terminus: Small ribosomal subunit protein uS9 (130 aa).

The tract at residues 107 to 130 is disordered; it reads DSRKVERKKPGLKKARKASQFSKR. Positions 111 to 130 are enriched in basic residues; that stretch reads VERKKPGLKKARKASQFSKR.

This sequence belongs to the universal ribosomal protein uS9 family.

The protein is Small ribosomal subunit protein uS9 of Streptococcus sanguinis (strain SK36).